A 158-amino-acid chain; its full sequence is NAD(P)H-quinone oxidoreductase subunit J, chloroplastic (158 aa).

This sequence belongs to the complex I 30 kDa subunit family. As to quaternary structure, NDH is composed of at least 16 different subunits, 5 of which are encoded in the nucleus.

It is found in the plastid. Its subcellular location is the chloroplast thylakoid membrane. It carries out the reaction a plastoquinone + NADH + (n+1) H(+)(in) = a plastoquinol + NAD(+) + n H(+)(out). The catalysed reaction is a plastoquinone + NADPH + (n+1) H(+)(in) = a plastoquinol + NADP(+) + n H(+)(out). Its function is as follows. NDH shuttles electrons from NAD(P)H:plastoquinone, via FMN and iron-sulfur (Fe-S) centers, to quinones in the photosynthetic chain and possibly in a chloroplast respiratory chain. The immediate electron acceptor for the enzyme in this species is believed to be plastoquinone. Couples the redox reaction to proton translocation, and thus conserves the redox energy in a proton gradient. The protein is NAD(P)H-quinone oxidoreductase subunit J, chloroplastic of Guizotia abyssinica (Niger).